The chain runs to 233 residues: tRNA pseudouridine synthase B (233 aa).

Catalysis depends on Asp-48, which acts as the Nucleophile.

The protein belongs to the pseudouridine synthase TruB family. Type 1 subfamily.

It carries out the reaction uridine(55) in tRNA = pseudouridine(55) in tRNA. In terms of biological role, responsible for synthesis of pseudouridine from uracil-55 in the psi GC loop of transfer RNAs. This is tRNA pseudouridine synthase B from Bacteroides fragilis (strain ATCC 25285 / DSM 2151 / CCUG 4856 / JCM 11019 / LMG 10263 / NCTC 9343 / Onslow / VPI 2553 / EN-2).